Reading from the N-terminus, the 153-residue chain is Endoribonuclease YbeY (153 aa).

The Zn(2+) site is built by His-118, His-122, and His-128.

It belongs to the endoribonuclease YbeY family. Zn(2+) is required as a cofactor.

It localises to the cytoplasm. Its function is as follows. Single strand-specific metallo-endoribonuclease involved in late-stage 70S ribosome quality control and in maturation of the 3' terminus of the 16S rRNA. The protein is Endoribonuclease YbeY of Staphylococcus haemolyticus (strain JCSC1435).